A 224-amino-acid chain; its full sequence is Phosphoglycolate phosphatase (224 aa).

Asp-11 functions as the Nucleophile in the catalytic mechanism. Mg(2+)-binding residues include Asp-11, Asp-13, and Asp-177.

It belongs to the HAD-like hydrolase superfamily. CbbY/CbbZ/Gph/YieH family. Mg(2+) serves as cofactor.

It carries out the reaction 2-phosphoglycolate + H2O = glycolate + phosphate. The protein operates within organic acid metabolism; glycolate biosynthesis; glycolate from 2-phosphoglycolate: step 1/1. Functionally, specifically catalyzes the dephosphorylation of 2-phosphoglycolate. Is involved in the dissimilation of the intracellular 2-phosphoglycolate formed during the DNA repair of 3'-phosphoglycolate ends, a major class of DNA lesions induced by oxidative stress. The protein is Phosphoglycolate phosphatase of Mannheimia succiniciproducens (strain KCTC 0769BP / MBEL55E).